We begin with the raw amino-acid sequence, 43 residues long: Avenin-F (43 aa).

Residues 1–23 (TTTVQYDPSEQYQPYPEQQEPFV) are disordered. Residues 10–23 (EQYQPYPEQQEPFV) are compositionally biased toward low complexity. Copy 1 of the repeat occupies 21–26 (PFVQQQ). Residues 21–40 (PFVQQQPPFVQQQQPFVQQQ) are 3 X 6 aa tandem repeats of P-F-V-Q-Q-Q. The 2; approximate repeat unit spans residues 27–34 (PPFVQQQQ). Repeat unit 3 spans residues 35-40 (PFVQQQ).

Belongs to the gliadin/glutenin family. Monomer.

The protein resides in the vacuole. It localises to the aleurone grain. Seed storage protein. Serves as a source of nitrogen, carbon, and sulfur for the young developing seedling. The polypeptide is Avenin-F (Avena sativa (Oat)).